The following is a 212-amino-acid chain: Imidazole glycerol phosphate synthase subunit HisH (212 aa).

A Glutamine amidotransferase type-1 domain is found at 2 to 212 (LTAIIDYESG…MIGNFLTWTP (211 aa)). Catalysis depends on C87, which acts as the Nucleophile. Catalysis depends on residues H192 and E194.

Heterodimer of HisH and HisF.

Its subcellular location is the cytoplasm. It carries out the reaction 5-[(5-phospho-1-deoxy-D-ribulos-1-ylimino)methylamino]-1-(5-phospho-beta-D-ribosyl)imidazole-4-carboxamide + L-glutamine = D-erythro-1-(imidazol-4-yl)glycerol 3-phosphate + 5-amino-1-(5-phospho-beta-D-ribosyl)imidazole-4-carboxamide + L-glutamate + H(+). The catalysed reaction is L-glutamine + H2O = L-glutamate + NH4(+). It functions in the pathway amino-acid biosynthesis; L-histidine biosynthesis; L-histidine from 5-phospho-alpha-D-ribose 1-diphosphate: step 5/9. IGPS catalyzes the conversion of PRFAR and glutamine to IGP, AICAR and glutamate. The HisH subunit catalyzes the hydrolysis of glutamine to glutamate and ammonia as part of the synthesis of IGP and AICAR. The resulting ammonia molecule is channeled to the active site of HisF. This chain is Imidazole glycerol phosphate synthase subunit HisH, found in Ruegeria pomeroyi (strain ATCC 700808 / DSM 15171 / DSS-3) (Silicibacter pomeroyi).